A 415-amino-acid polypeptide reads, in one-letter code: Corticotropin-releasing factor receptor 1 (415 aa).

The first 23 residues, 1-23, serve as a signal peptide directing secretion; sequence MGRRPQLRLVKALLLLGLNSISA. Topologically, residues 24-111 are extracellular; that stretch reads SLQDQHCESL…CQEILSEGEK (88 aa). 3 disulfides stabilise this stretch: C30/C54, C44/C87, and C68/C102. N38, N45, N51, N78, N90, and N98 each carry an N-linked (GlcNAc...) asparagine glycan. Positions 99 to 108 are important for peptide agonist binding; sequence HSECQEILSE. A helical transmembrane segment spans residues 112-142; the sequence is SKAHYHIAVIINYLGHCISLAALLVAFVLFL. Residues 143 to 149 are Cytoplasmic-facing; that stretch reads RLRSIRC. Residues 150–174 form a helical membrane-spanning segment; that stretch reads VRNIIHWNLISAFILRNATWFVVQL. At 175–189 the chain is on the extracellular side; sequence TMSPEVHQSNVGWCR. C188 and C258 are joined by a disulfide. The chain crosses the membrane as a helical span at residues 190-218; sequence LVTAAYNYFHVTNFFWMFGEGCYLHTAVV. Topologically, residues 219–225 are cytoplasmic; that stretch reads LTYSTDR. Residues 226 to 253 traverse the membrane as a helical segment; that stretch reads LRKWMFICIGWGVPFPIIVAWAIGKLYY. Topologically, residues 254-269 are extracellular; the sequence is DNEKCWFGKRPGVYTD. A helical membrane pass occupies residues 270–295; sequence YIYQGPMILVLLINFIFLFNIVRILM. Residues 280-290 are important for antagonist binding; it reads LLINFIFLFNI. The Cytoplasmic portion of the chain corresponds to 296-306; that stretch reads TKLRASTTSET. S301 bears the Phosphoserine; by PKA mark. Residues 307 to 331 traverse the membrane as a helical segment; that stretch reads IQYRKAVKATLVLLPLLGITYMLFF. Residues 332-338 lie on the Extracellular side of the membrane; sequence VNPGEDE. The chain crosses the membrane as a helical span at residues 339 to 368; that stretch reads VSRVVFIYFNSFLESFQGFFVSVFYCFLNS. At 369–415 the chain is on the cytoplasmic side; it reads EVRSAIRKRWHRWQDKHSIRARVARAMSIPTSPTRVSFHSIKQSTAV.

It belongs to the G-protein coupled receptor 2 family. In terms of assembly, heterodimer; heterodimerizes with GPER1. Interacts (via N-terminal extracellular domain) with CRH and UCN. Interacts with DLG1; this inhibits endocytosis of CRHR1 after agonist binding. C-terminal Ser or Thr residues may be phosphorylated. Post-translationally, phosphorylation at Ser-301 by PKA prevents maximal coupling to Gq-protein, and thereby negatively regulates downstream signaling.

The protein resides in the cell membrane. Its subcellular location is the endosome. Its function is as follows. G-protein coupled receptor for CRH (corticotropin-releasing factor) and UCN (urocortin). Has high affinity for CRH and UCN. Ligand binding causes a conformation change that triggers signaling via guanine nucleotide-binding proteins (G proteins) and down-stream effectors, such as adenylate cyclase. Promotes the activation of adenylate cyclase, leading to increased intracellular cAMP levels. Inhibits the activity of the calcium channel CACNA1H. Required for normal embryonic development of the adrenal gland and for normal hormonal responses to stress. Plays a role in the response to anxiogenic stimuli. This chain is Corticotropin-releasing factor receptor 1 (CRHR1), found in Ovis aries (Sheep).